We begin with the raw amino-acid sequence, 290 residues long: Ribonuclease HIII (290 aa).

The RNase H type-2 domain occupies 78–290 (LPLIGTDEVG…FKNTEKAKNA (213 aa)). A divalent metal cation is bound by residues aspartate 84, glutamate 85, and aspartate 187.

Belongs to the RNase HII family. RnhC subfamily. Mn(2+) serves as cofactor. Requires Mg(2+) as cofactor.

The protein localises to the cytoplasm. The enzyme catalyses Endonucleolytic cleavage to 5'-phosphomonoester.. Endonuclease that specifically degrades the RNA of RNA-DNA hybrids. The polypeptide is Ribonuclease HIII (Streptococcus pneumoniae serotype 2 (strain D39 / NCTC 7466)).